We begin with the raw amino-acid sequence, 366 residues long: Phospho-N-acetylmuramoyl-pentapeptide-transferase (366 aa).

The next 10 helical transmembrane spans lie at 27 to 47, 71 to 91, 93 to 113, 134 to 154, 174 to 194, 205 to 225, 245 to 265, 268 to 288, 294 to 314, and 343 to 363; these read AALF…INSL, TPTM…LLWA, LSNV…AIGF, LGIE…TALA, FMIN…VGAG, GLAI…AYLA, LAVV…FNAP, AIFM…TVAV, IVMA…IIQV, and QVVI…LSTL.

This sequence belongs to the glycosyltransferase 4 family. MraY subfamily. Mg(2+) is required as a cofactor.

It localises to the cell inner membrane. It carries out the reaction UDP-N-acetyl-alpha-D-muramoyl-L-alanyl-gamma-D-glutamyl-meso-2,6-diaminopimeloyl-D-alanyl-D-alanine + di-trans,octa-cis-undecaprenyl phosphate = di-trans,octa-cis-undecaprenyl diphospho-N-acetyl-alpha-D-muramoyl-L-alanyl-D-glutamyl-meso-2,6-diaminopimeloyl-D-alanyl-D-alanine + UMP. It functions in the pathway cell wall biogenesis; peptidoglycan biosynthesis. Catalyzes the initial step of the lipid cycle reactions in the biosynthesis of the cell wall peptidoglycan: transfers peptidoglycan precursor phospho-MurNAc-pentapeptide from UDP-MurNAc-pentapeptide onto the lipid carrier undecaprenyl phosphate, yielding undecaprenyl-pyrophosphoryl-MurNAc-pentapeptide, known as lipid I. The polypeptide is Phospho-N-acetylmuramoyl-pentapeptide-transferase (Rhizobium leguminosarum bv. trifolii (strain WSM2304)).